Consider the following 131-residue polypeptide: Probable ATP synthase subunit g 1, mitochondrial (131 aa).

This sequence belongs to the ATPase g subunit family. In terms of assembly, subunit of the F-type ATPase which has 2 components, CF(1) - the catalytic core - and CF(0) - the membrane proton channel.

It localises to the mitochondrion membrane. In terms of biological role, mitochondrial membrane ATP synthase (F(1)F(0) ATP synthase or Complex V) produces ATP from ADP in the presence of a proton gradient across the membrane which is generated by electron transport complexes of the respiratory chain. F-type ATPases consist of two structural domains, F(1) - containing the extramembraneous catalytic core, and F(0) - containing the membrane proton channel, linked together by a central stalk and a peripheral stalk. During catalysis, ATP synthesis in the catalytic domain of F(1) is coupled via a rotary mechanism of the central stalk subunits to proton translocation. Part of the complex F(0) domain. Minor subunit located with subunit a in the membrane. The sequence is that of Probable ATP synthase subunit g 1, mitochondrial from Caenorhabditis elegans.